Consider the following 373-residue polypeptide: Alanine dehydrogenase (373 aa).

Arg15 and Lys75 together coordinate substrate. The Proton donor/acceptor role is filled by His96. Residues Ser134, 178 to 179, Asp198, Ser220, 239 to 240, 267 to 270, Arg280, and 299 to 302 contribute to the NAD(+) site; these read IV, VL, VAID, and VANI. The active-site Proton donor/acceptor is the Asp270.

This sequence belongs to the AlaDH/PNT family. Homohexamer. Trimer of dimer.

The protein localises to the cytoplasm. It catalyses the reaction L-alanine + NAD(+) + H2O = pyruvate + NH4(+) + NADH + H(+). Its pathway is amino-acid degradation; L-alanine degradation via dehydrogenase pathway; NH(3) and pyruvate from L-alanine: step 1/1. Functionally, catalyzes the reversible reductive amination of pyruvate to L-alanine. This enzyme is a key factor in the assimilation of L-alanine as an energy source through the tricarboxylic acid cycle. The chain is Alanine dehydrogenase from Methanococcus maripaludis (strain DSM 14266 / JCM 13030 / NBRC 101832 / S2 / LL).